Reading from the N-terminus, the 2181-residue chain is Genome polyprotein (2181 aa).

The N-myristoyl glycine; by host moiety is linked to residue Gly80. 2 interaction with host receptor ANTXR1 regions span residues 316–337 (DYRT…PPNW) and 761–772 (RFGLYANPSGSG). The region spanning 1165 to 1333 (LGKTNLAQSL…YKKHTRLNFD (169 aa)) is the SF3 helicase domain. ATP is bound at residue 1197–1204 (GKPGCGKS). Residues 1472–1500 (EETESEGSVKAPRSENAYDGPKKNSKPPG) form a disordered region. An O-(5'-phospho-RNA)-tyrosine modification is found at Tyr1489. Residues 1511–1704 (NVDMGFEAAV…AGTYISKLGL (194 aa)) form the Peptidase C3 domain. His1556 functions as the For protease 3C activity and deubiquitinase activity in the catalytic mechanism. Asp1592 acts as the For protease 3C activity in catalysis. Catalysis depends on Cys1668, which acts as the For protease 3C activity and deubiquitinase activity. The 119-residue stretch at 1950–2068 (KNTYDVDYSA…GTDYDLDFNE (119 aa)) folds into the RdRp catalytic domain. Active-site for RdRp activity residues include Asp1956 and Asp2054.

Interacts with host entry receptor ANTRX1. In terms of assembly, interacts with host IRF3; this interaction is involved in the suppression of IRF3 and IRF7 expression and phosphorylation by the virus. Interacts with host IRF7; this interaction is involved in the suppression of IRF3 and IRF7 expression and phosphorylation by the virus. Interacts with host MAVS; this interaction allows the cleavage of MAVS and subsequent suppression of host immunity. Interacts with host TRIF; this interaction allows the cleavage of TRIF and subsequent suppression of host immunity. Interacts with host TANK; this interaction allows the cleavage of TANK and subsequent suppression of host immunity. Interacts with host RIGI. Interacts with host TBK1. Interacts with host TRAF3. In terms of processing, specific enzymatic cleavages by the viral protease in vivo yield a variety of precursors and mature proteins. The polyprotein seems to be cotranslationally cleaved at the 2A/2B junction by a ribosomal skip from one codon to the next without formation of a peptide bond. This process would release the P1-2A peptide from the translational complex. Post-translationally, during virion maturation, immature virions are rendered infectious following cleavage of VP0 into VP4 and VP2. This maturation seems to be an autocatalytic event triggered by the presence of RNA in the capsid and is followed by a conformational change of the particle. Myristoylation is required during RNA encapsidation and formation of the mature virus particle. In terms of processing, uridylylated by the polymerase and is covalently linked to the 5'-end of genomic RNA. This uridylylated form acts as a nucleotide-peptide primer for the polymerase.

The protein localises to the virion. It is found in the host cytoplasm. The protein resides in the host nucleus. It localises to the host nucleolus. Its subcellular location is the host cytoplasmic vesicle membrane. It carries out the reaction RNA(n) + a ribonucleoside 5'-triphosphate = RNA(n+1) + diphosphate. The enzyme catalyses Selective cleavage of Gln-|-Gly bond in the poliovirus polyprotein. In other picornavirus reactions Glu may be substituted for Gln, and Ser or Thr for Gly.. The catalysed reaction is Thiol-dependent hydrolysis of ester, thioester, amide, peptide and isopeptide bonds formed by the C-terminal Gly of ubiquitin (a 76-residue protein attached to proteins as an intracellular targeting signal).. It catalyses the reaction ATP + H2O = ADP + phosphate + H(+). Functionally, forms an icosahedral capsid of pseudo T=3 symmetry with capsid proteins VP2 and VP3. Together they form an icosahedral capsid composed of 60 copies of each VP1, VP2, and VP3, with a diameter of approximately 325 Angstroms. VP4 lies on the inner surface of the protein shell formed by VP1, VP2 and VP3. All the three latter proteins contain a beta-sheet structure called beta-barrel jelly roll. VP1 is situated at the 12 fivefold axes, whereas VP2 and VP3 are located at the quasi-sixfold axes. Binds the host receptor ANTXR1 for attachment and uncoating (entry). Its function is as follows. Forms an icosahedral capsid of pseudo T=3 symmetry with capsid proteins VP2 and VP3. Together they form an icosahedral capsid composed of 60 copies of each VP1, VP2, and VP3, with a diameter of approximately 270 Angstroms. VP4 lies on the inner surface of the protein shell formed by VP1, VP2 and VP3. All the three latter proteins contain a beta-sheet structure called beta-barrel jelly roll. VP1 is situated at the 12 fivefold axes, whereas VP2 and VP3 are located at the quasi-sixfold axes. Binds the host receptor ANTXR1 for attachment and uncoating (entry). Forms an icosahedral capsid of pseudo T=3 symmetry with capsid proteins VP2 and VP3. Together they form an icosahedral capsid composed of 60 copies of each VP1, VP2, and VP3, with a diameter of approximately 270 Angstroms. VP4 lies on the inner surface of the protein shell formed by VP1, VP2 and VP3. All the three latter proteins contain a beta-sheet structure called beta-barrel jelly roll. VP1 is situated at the 12 fivefold axes, whereas VP2 and VP3 are located at the quasi-sixfold axes. Vp3 also seems to be involved in the binding to host receptor ANTXR1 for attachment and uncoating (entry). In terms of biological role, lies on the inner surface of the capsid shell. After binding to the host receptor, the capsid undergoes conformational changes. Capsid protein VP4 is released, capsid protein VP1 N-terminus is externalized, and together, they shape a pore in the host membrane through which the viral genome is translocated into the host cell cytoplasm. After genome has been released, the channel shrinks. Functionally, VP0 precursor is a component of immature procapsids. Its function is as follows. Mediates self-processing of the polyprotein by a translational effect termed 'ribosome skipping'. Mechanistically, 2A-mediated cleavage occurs between the C-terminal glycine and the proline of the downstream protein 2B. Plays an essential role in the virus replication cycle by acting as a viroporin. Creates a pore in the host endoplasmic reticulum and as a consequence releases Ca2+ in the cytoplasm of infected cell. In turn, high levels of cytoplasmic calcium may trigger membrane trafficking and transport of viral ER-associated proteins to viroplasms, sites of viral genome replication. In terms of biological role, associates with and induces structural rearrangements of intracellular membranes. Functionally, covalently linked to the 5'-end of both the positive-strand and negative-strand genomic RNAs. Acts as a genome-linked replication primer. Its function is as follows. Cysteine protease that generates mature viral proteins from the precursor polyprotein. Inactivates crucial host adapter molecules in order to suppress antiviral type-I interferon (type-I IFN) and NF-kappaB production to escape host antiviral innate immune responses. Deubiquitinase that acts on both lysine-48- and lysine-63-linked polyubiquitin chains and inhibits the ubiquitination of the ATP-dependent RNA helicase RIGI, TANK-binding kinase 1 (TBK1), and TNF receptor-associated factor 3 (TRAF3), thereby blocking the expression of IFN-beta and IFN stimulated gene 54 (ISG54). Induces host IRF3 and IRF7 degradation thereby suppressing IRF3- and IRF7-induced type-I IFN production. Also decreases host IRF3 phosphorylation leading to negligible IRF3 activation. Cleaves host MAVS, TRIF and TANK, which are then unable to regulate pattern recognition receptor (PRR)-mediated type-I IFN production. Inhibits the integrated stress response (ISR) in the infected cell by disrupting eIF4GI-G3BP1 interaction. Stress granule formation is thus inhibited. Replicates the genomic and antigenomic RNAs by recognizing replications specific signals. Performs VPg uridylylation. This chain is Genome polyprotein, found in Sus scrofa (Pig).